Consider the following 107-residue polypeptide: Large ribosomal subunit protein uL23 (107 aa).

This sequence belongs to the universal ribosomal protein uL23 family. As to quaternary structure, part of the 50S ribosomal subunit. Contacts protein L29, and trigger factor when it is bound to the ribosome.

In terms of biological role, one of the early assembly proteins it binds 23S rRNA. One of the proteins that surrounds the polypeptide exit tunnel on the outside of the ribosome. Forms the main docking site for trigger factor binding to the ribosome. The chain is Large ribosomal subunit protein uL23 from Gluconobacter oxydans (strain 621H) (Gluconobacter suboxydans).